We begin with the raw amino-acid sequence, 237 residues long: Methylthioribulose-1-phosphate dehydratase (237 aa).

Residue Cys-98 participates in substrate binding. Positions 116 and 118 each coordinate Zn(2+). Glu-140 (proton donor/acceptor) is an active-site residue. His-196 contributes to the Zn(2+) binding site.

This sequence belongs to the aldolase class II family. MtnB subfamily. Requires Zn(2+) as cofactor.

Its subcellular location is the cytoplasm. The catalysed reaction is 5-(methylsulfanyl)-D-ribulose 1-phosphate = 5-methylsulfanyl-2,3-dioxopentyl phosphate + H2O. It functions in the pathway amino-acid biosynthesis; L-methionine biosynthesis via salvage pathway; L-methionine from S-methyl-5-thio-alpha-D-ribose 1-phosphate: step 2/6. In terms of biological role, catalyzes the dehydration of methylthioribulose-1-phosphate (MTRu-1-P) into 2,3-diketo-5-methylthiopentyl-1-phosphate (DK-MTP-1-P). The chain is Methylthioribulose-1-phosphate dehydratase from Laccaria bicolor (strain S238N-H82 / ATCC MYA-4686) (Bicoloured deceiver).